A 291-amino-acid polypeptide reads, in one-letter code: 4-hydroxy-tetrahydrodipicolinate synthase (291 aa).

Thr45 serves as a coordination point for pyruvate. Tyr133 acts as the Proton donor/acceptor in catalysis. Catalysis depends on Lys161, which acts as the Schiff-base intermediate with substrate. A pyruvate-binding site is contributed by Ile203.

Belongs to the DapA family. In terms of assembly, homotetramer; dimer of dimers.

The protein resides in the cytoplasm. It carries out the reaction L-aspartate 4-semialdehyde + pyruvate = (2S,4S)-4-hydroxy-2,3,4,5-tetrahydrodipicolinate + H2O + H(+). The protein operates within amino-acid biosynthesis; L-lysine biosynthesis via DAP pathway; (S)-tetrahydrodipicolinate from L-aspartate: step 3/4. Functionally, catalyzes the condensation of (S)-aspartate-beta-semialdehyde [(S)-ASA] and pyruvate to 4-hydroxy-tetrahydrodipicolinate (HTPA). This Neisseria gonorrhoeae (strain ATCC 700825 / FA 1090) protein is 4-hydroxy-tetrahydrodipicolinate synthase.